A 155-amino-acid polypeptide reads, in one-letter code: Ribosomal RNA large subunit methyltransferase H (155 aa).

Residues leucine 72, glycine 103, and 122-127 each bind S-adenosyl-L-methionine; that span reads LSPLTL.

It belongs to the RNA methyltransferase RlmH family. Homodimer.

Its subcellular location is the cytoplasm. The enzyme catalyses pseudouridine(1915) in 23S rRNA + S-adenosyl-L-methionine = N(3)-methylpseudouridine(1915) in 23S rRNA + S-adenosyl-L-homocysteine + H(+). In terms of biological role, specifically methylates the pseudouridine at position 1915 (m3Psi1915) in 23S rRNA. This Actinobacillus pleuropneumoniae serotype 5b (strain L20) protein is Ribosomal RNA large subunit methyltransferase H.